Here is a 381-residue protein sequence, read N- to C-terminus: MTAATLFTQQTTPQFDKASIDTDVNHHAKTTAIEAMLYDDSDDRNDDFMDEQADKILADTQSLTESAYFRKLQKKLRRQVSWAIRDFNMIEDGDVVMVCVSGGKDSYTLLDILLLLKRIAPIHFDIVAVNLDQKQPGYPEEVLPAYLNEQGIAHYILEKDTYSIVKSVVPEGKTYCSACSRLRRGSLYGFAKQIGATKIALGHHRDDMLATFFLNLFHGGALKSMPPKLLSDDKQNMLIRPLAYVEEKDIIEYARLKEFPIIPCNLCGSQTNLQRAIINDMLREWDDAHPQRLASIFKAMQNVAPSQLADRELFDFETLSLERDDNERLFEGDNIQAGQIESLAEIGLPVAPATQIFNPNFVDTEKGSHTPKKIPTINPVI.

The PP-loop motif signature appears at 101–106; sequence SGGKDS. Residues C176, C179, and C267 each contribute to the [4Fe-4S] cluster site.

Belongs to the TtcA family. Homodimer. It depends on Mg(2+) as a cofactor. Requires [4Fe-4S] cluster as cofactor.

The protein localises to the cytoplasm. It carries out the reaction cytidine(32) in tRNA + S-sulfanyl-L-cysteinyl-[cysteine desulfurase] + AH2 + ATP = 2-thiocytidine(32) in tRNA + L-cysteinyl-[cysteine desulfurase] + A + AMP + diphosphate + H(+). It participates in tRNA modification. In terms of biological role, catalyzes the ATP-dependent 2-thiolation of cytidine in position 32 of tRNA, to form 2-thiocytidine (s(2)C32). The sulfur atoms are provided by the cysteine/cysteine desulfurase (IscS) system. The polypeptide is tRNA-cytidine(32) 2-sulfurtransferase (Psychrobacter arcticus (strain DSM 17307 / VKM B-2377 / 273-4)).